The primary structure comprises 92 residues: Protein OP-ORF (92 aa).

Residues 53–82 are a coiled coil; it reads KMLAATISILEEEVTELVTELNNTTNLTAK.

This Rice dwarf virus (isolate Fujian) (RDV) protein is Protein OP-ORF.